We begin with the raw amino-acid sequence, 138 residues long: Small ribosomal subunit protein uS11c (138 aa).

The disordered stretch occupies residues 1–23; sequence MAKPILRIGSRKNTRSGSRKNVR. Positions 9 to 23 are enriched in basic residues; it reads GSRKNTRSGSRKNVR.

This sequence belongs to the universal ribosomal protein uS11 family. As to quaternary structure, part of the 30S ribosomal subunit.

It is found in the plastid. It localises to the chloroplast. In Aethionema grandiflorum (Persian stone-cress), this protein is Small ribosomal subunit protein uS11c.